The sequence spans 813 residues: Putative ATPase, plasma membrane-like (813 aa).

Over 1–66 (MATGDSLEDI…KKKEHITLRF (66 aa)) the chain is Cytoplasmic. Residues 67-86 (FALMFKPLSWVIQAAAIMAM) form a helical membrane-spanning segment. The Extracellular portion of the chain corresponds to 87–94 (LFANGDGR). The chain crosses the membrane as a helical span at residues 95 to 115 (QLFLGIVCLLIVNTIICYLKE). The Cytoplasmic segment spans residues 116–245 (DDAANVVAMA…GHFRKVVTEI (130 aa)). Residues 246-266 (ENLCVISIAIGISIEVIVMYW) traverse the membrane as a helical segment. Over 267–275 (IQRRNFSDV) the chain is Extracellular. Residues 276–293 (INNLLVLVIGGIPLAMPT) traverse the membrane as a helical segment. The Cytoplasmic segment spans residues 294–555 (VLYVIMVTGS…ASRAILQQMK (262 aa)). Catalysis depends on aspartate 331, which acts as the 4-aspartylphosphate intermediate. Aspartate 500 and aspartate 504 together coordinate Mg(2+). The chain crosses the membrane as a helical span at residues 556–577 (HYTIYAVSITIRVVFGFMFIAL). At 578–582 (IWKFD) the chain is on the extracellular side. The chain crosses the membrane as a helical span at residues 583–605 (FSPFMVLAIALLNEETTKAITMD). Topologically, residues 606-622 (NVTNPSPTPDSLKLKEI) are cytoplasmic. A helical transmembrane segment spans residues 623-643 (FATGVVYGSYMALITVVFFWA). The Extracellular segment spans residues 644 to 664 (AYRTDIFPRTFHVRDLRGNEA). A helical membrane pass occupies residues 665-685 (EMMCALYLQVSIMSQALFFVI). The Cytoplasmic portion of the chain corresponds to 686–697 (QSRSWFFVERPG). The helical transmembrane segment at 698–718 (ELLFLSFVTVQTIATTLAVYA) threads the bilayer. Residues 719 to 726 (SWETARIE) lie on the Extracellular side of the membrane. A helical transmembrane segment spans residues 727–747 (GIGWSWAGVIWLYNIIFFFPL). Residues 748–813 (DIMKFGIRYI…SQDLRGVGWV (66 aa)) lie on the Cytoplasmic side of the membrane. Serine 776 bears the Phosphoserine mark.

This sequence belongs to the cation transport ATPase (P-type) (TC 3.A.3) family. Type IIIA subfamily.

The protein localises to the membrane. This is Putative ATPase, plasma membrane-like from Arabidopsis thaliana (Mouse-ear cress).